Here is a 62-residue protein sequence, read N- to C-terminus: Large ribosomal subunit protein eL24 (62 aa).

Residues Cys6, Cys9, Cys32, and Cys36 each coordinate Zn(2+). The C4-type zinc finger occupies 6 to 36 (CSFCGADIPPGYGIMYVRSDGTVQRFCSRKC).

It belongs to the eukaryotic ribosomal protein eL24 family. Part of the 50S ribosomal subunit. Forms a cluster with proteins L3 and L14. The cofactor is Zn(2+).

Its function is as follows. Binds to the 23S rRNA. This chain is Large ribosomal subunit protein eL24, found in Pyrobaculum calidifontis (strain DSM 21063 / JCM 11548 / VA1).